We begin with the raw amino-acid sequence, 270 residues long: NADPH-dependent aldehyde reductase-like protein, chloroplastic (270 aa).

A chloroplast-targeting transit peptide spans 1 to 53 (MSTHSSISQPPLPLAGRVAIVTGSSRGIGRAIAIHLAELGARIVINYTSKAAD). 26 to 50 (RGIGRAIAIHLAELGARIVINYTSK) is an NADP(+) binding site. Substrate is bound at residue Ser-165. Tyr-178 acts as the Proton acceptor in catalysis.

Belongs to the short-chain dehydrogenases/reductases (SDR) family.

Its subcellular location is the plastid. It localises to the chloroplast. Functionally, aldehyde reductase that catalyzes the reduction of the aldehyde carbonyl groups on saturated and alpha,beta-unsaturated aldehydes with more than 5 carbons. In Arabidopsis thaliana (Mouse-ear cress), this protein is NADPH-dependent aldehyde reductase-like protein, chloroplastic.